We begin with the raw amino-acid sequence, 131 residues long: MAPPKAEKKPASKAPAEKKPAAKKTASSTDAKKRTKTRKETYSSYIYKVLKQTHPDTGISQKAMSIMNSFVNDIFERIASEASKLAAYNKKSTISAREIQTAVRLILPGELAKHAVSEGTRAVTKYSSASN.

The segment covering 1–20 (MAPPKAEKKPASKAPAEKKP) has biased composition (basic and acidic residues). The interval 1-39 (MAPPKAEKKPASKAPAEKKPAAKKTASSTDAKKRTKTRK) is disordered. Lys8 and Lys9 each carry N6-acetyllysine; alternate. Residues Lys8 and Lys9 each participate in a glycyl lysine isopeptide (Lys-Gly) (interchain with G-Cter in SUMO); alternate cross-link. Ser12 carries the phosphoserine modification. Residue Lys13 is modified to N6-acetyllysine. Position 18 is an N6-acetyllysine; alternate (Lys18). A Glycyl lysine isopeptide (Lys-Gly) (interchain with G-Cter in SUMO); alternate cross-link involves residue Lys18. Residue Lys19 forms a Glycyl lysine isopeptide (Lys-Gly) (interchain with G-Cter in SUMO) linkage. Lys125 participates in a covalent cross-link: Glycyl lysine isopeptide (Lys-Gly) (interchain with G-Cter in ubiquitin).

The protein belongs to the histone H2B family. The nucleosome is a histone octamer containing two molecules each of H2A, H2B, H3 and H4 assembled in one H3-H4 heterotetramer and two H2A-H2B heterodimers. The octamer wraps approximately 147 bp of DNA. In terms of processing, monoubiquitinated to form H2BK123ub1. H2BK123ub1 gives a specific tag for epigenetic transcriptional activation and is also prerequisite for H3K4me and H3K79me formation. H2BK123ub1 also modulates the formation of double-strand breaks during meiosis and is a prerequisite for DNA-damage checkpoint activation. Phosphorylated by STE20 to form H2BS10ph during progression through meiotic prophase. May be correlated with chromosome condensation. Post-translationally, acetylated by GCN5 to form H2BK11ac and H2BK16ac. H2BK16ac can also be formed by ESA1. Acetylation of N-terminal lysines and particularly formation of H2BK11acK16ac has a positive effect on transcription. In terms of processing, sumoylation to form H2BK6su or H2BK7su, and probably also H2BK16su or H2BK17su, occurs preferentially near the telomeres and represses gene transcription.

The protein resides in the nucleus. The protein localises to the chromosome. Its function is as follows. Core component of nucleosome. Nucleosomes wrap and compact DNA into chromatin, limiting DNA accessibility to the cellular machineries which require DNA as a template. Histones thereby play a central role in transcription regulation, DNA repair, DNA replication and chromosomal stability. DNA accessibility is regulated via a complex set of post-translational modifications of histones, also called histone code, and nucleosome remodeling. The sequence is that of Histone H2B.2 (HTB2) from Scheffersomyces stipitis (strain ATCC 58785 / CBS 6054 / NBRC 10063 / NRRL Y-11545) (Yeast).